Consider the following 207-residue polypeptide: Ribosomal RNA large subunit methyltransferase E (207 aa).

S-adenosyl-L-methionine-binding residues include Gly-60, Trp-62, Asp-80, Asp-96, and Asp-121. Residue Lys-161 is the Proton acceptor of the active site.

Belongs to the class I-like SAM-binding methyltransferase superfamily. RNA methyltransferase RlmE family.

The protein localises to the cytoplasm. It catalyses the reaction uridine(2552) in 23S rRNA + S-adenosyl-L-methionine = 2'-O-methyluridine(2552) in 23S rRNA + S-adenosyl-L-homocysteine + H(+). Specifically methylates the uridine in position 2552 of 23S rRNA at the 2'-O position of the ribose in the fully assembled 50S ribosomal subunit. The sequence is that of Ribosomal RNA large subunit methyltransferase E from Azotobacter vinelandii (strain DJ / ATCC BAA-1303).